Reading from the N-terminus, the 360-residue chain is Tryptophan--tRNA ligase, mitochondrial (360 aa).

The transit peptide at 1–18 directs the protein to the mitochondrion; it reads MALFSVRKARECWRFIRA. ATP contacts are provided by residues Gln42 and 48 to 51; that span reads HLGN. Asp167 serves as a coordination point for L-tryptophan. ATP contacts are provided by residues 179 to 181, Val217, and 226 to 230; these read GED and KMSKS.

It belongs to the class-I aminoacyl-tRNA synthetase family.

It localises to the mitochondrion matrix. It is found in the mitochondrion. It catalyses the reaction tRNA(Trp) + L-tryptophan + ATP = L-tryptophyl-tRNA(Trp) + AMP + diphosphate + H(+). Catalyzes the attachment of tryptophan to tRNA(Trp) in a two-step reaction: tryptophan is first activated by ATP to form Trp-AMP and then transferred to the acceptor end of tRNA(Trp). The polypeptide is Tryptophan--tRNA ligase, mitochondrial (Wars2) (Mus musculus (Mouse)).